The chain runs to 353 residues: S-adenosylmethionine:tRNA ribosyltransferase-isomerase (353 aa).

It belongs to the QueA family. Monomer.

It is found in the cytoplasm. It carries out the reaction 7-aminomethyl-7-carbaguanosine(34) in tRNA + S-adenosyl-L-methionine = epoxyqueuosine(34) in tRNA + adenine + L-methionine + 2 H(+). The protein operates within tRNA modification; tRNA-queuosine biosynthesis. In terms of biological role, transfers and isomerizes the ribose moiety from AdoMet to the 7-aminomethyl group of 7-deazaguanine (preQ1-tRNA) to give epoxyqueuosine (oQ-tRNA). This is S-adenosylmethionine:tRNA ribosyltransferase-isomerase from Nitrosomonas europaea (strain ATCC 19718 / CIP 103999 / KCTC 2705 / NBRC 14298).